We begin with the raw amino-acid sequence, 511 residues long: Glutamate/gamma-aminobutyrate antiporter (511 aa).

Topologically, residues 1 to 13 (MATSVQTGKAKQL) are cytoplasmic. The chain crosses the membrane as a helical span at residues 14 to 36 (TLLGFFAITASMVMAVYEYPTFA). Topologically, residues 37-40 (TSGF) are periplasmic. A helical membrane pass occupies residues 41–64 (SLVFFLLLGGILWFIPVGLCAAEM). The Cytoplasmic portion of the chain corresponds to 65–85 (ATVDGWEEGGVFAWVSNTLGP). Residues 86–112 (RWGFAAISFGYLQIAIGFIPMLYFVLG) traverse the membrane as a helical segment. The Periplasmic segment spans residues 113–126 (ALSYILKWPALNED). Residues 127-147 (PITKTIAALIILWALALTQFG) traverse the membrane as a helical segment. Residues 148–151 (GTKY) lie on the Cytoplasmic side of the membrane. A helical transmembrane segment spans residues 152–180 (TARIAKVGFFAGILLPAFILIALAAIYLH). At 181 to 201 (SGAPVAIEMDSKTFFPDFSKV) the chain is on the periplasmic side. A helical transmembrane segment spans residues 202-225 (GTLVVFVAFILSYMGVEASATHVN). The Cytoplasmic segment spans residues 226–229 (EMSN). Residues 230–259 (PGRDYPLAMLLLMVAAICLSSVGGLSIAMV) form a helical membrane-spanning segment. Topologically, residues 260 to 288 (IPGNEINLSAGVMQTFTVLMSHVAPEIEW) are periplasmic. A helical transmembrane segment spans residues 289–322 (TVRVISALLLLGVLAEIASWIVGPSRGMYVTAQK). Residues 323–337 (NLLPAAFAKMNKNGV) lie on the Cytoplasmic side of the membrane. A helical transmembrane segment spans residues 338–359 (PVTLVISQLVITSIALIILTNT). Residues 360 to 362 (GGG) are Periplasmic-facing. Residues 363–396 (NNMSFLIALALTVVIYLCAYFMLFIGYIVLVLKH) traverse the membrane as a helical segment. Residues 397-409 (PDLKRTFNIPGGK) are Cytoplasmic-facing. The chain crosses the membrane as a helical span at residues 410–430 (GVKLVVAIVGLLTSIMAFIVS). Residues 431-443 (FLPPDNIQGDSTD) lie on the Periplasmic side of the membrane. The helical transmembrane segment at 444–467 (MYVELLVVSFLVVLALPFILYAVH) threads the bilayer. At 468 to 511 (DRKGKANTGVTLEPINSQNAPKGHFFLHPRARSPHYIVMNDKKH) the chain is on the cytoplasmic side.

This sequence belongs to the amino acid-polyamine-organocation (APC) superfamily. Glutamate:GABA antiporter (GGA) (TC 2.A.3.7) family. Monomer.

It is found in the cell inner membrane. It carries out the reaction 4-aminobutanoate(in) + L-glutamate(out) = 4-aminobutanoate(out) + L-glutamate(in). Shows pH-dependent activity. The Glu/GABA transport activity is robust at pH 4.5 and rapidly decreases with increasing pH, with no detectable activity at pH 6.5 or above. The Glu analog L-trans-pyrrolidine-2,4-dicarboxylic acid (L-PDC) blocks the uptake of glutamate by selective inhibition. In terms of biological role, involved in glutaminase-dependent acid resistance. Exchanges extracellular glutamate (Glu) for intracellular gamma-aminobutyric acid (GABA) under acidic conditions. The protonation states of substrates are crucial for transport. Selectively transports Glu with no net charge and GABA with a positive charge. Also efficiently transports glutamine and, to a smaller extent, methionine and leucine. When the extracellular pH drops below 2.5, can import L-glutamine and export either glutamate or GABA. The ability to survive the extremely acidic conditions of the stomach is essential for successful colonization of the host by commensal and pathogenic bacteria. The chain is Glutamate/gamma-aminobutyrate antiporter from Escherichia coli (strain K12).